Reading from the N-terminus, the 282-residue chain is Lipoyl synthase (282 aa).

Cys37, Cys42, Cys48, Cys63, Cys67, Cys70, and Ser275 together coordinate [4Fe-4S] cluster. Positions 49 to 264 constitute a Radical SAM core domain; that stretch reads WSRGTATFMI…RLVGIEKGFR (216 aa).

Belongs to the radical SAM superfamily. Lipoyl synthase family. [4Fe-4S] cluster serves as cofactor.

It is found in the cytoplasm. It carries out the reaction [[Fe-S] cluster scaffold protein carrying a second [4Fe-4S](2+) cluster] + N(6)-octanoyl-L-lysyl-[protein] + 2 oxidized [2Fe-2S]-[ferredoxin] + 2 S-adenosyl-L-methionine + 4 H(+) = [[Fe-S] cluster scaffold protein] + N(6)-[(R)-dihydrolipoyl]-L-lysyl-[protein] + 4 Fe(3+) + 2 hydrogen sulfide + 2 5'-deoxyadenosine + 2 L-methionine + 2 reduced [2Fe-2S]-[ferredoxin]. It participates in protein modification; protein lipoylation via endogenous pathway; protein N(6)-(lipoyl)lysine from octanoyl-[acyl-carrier-protein]: step 2/2. Functionally, catalyzes the radical-mediated insertion of two sulfur atoms into the C-6 and C-8 positions of the octanoyl moiety bound to the lipoyl domains of lipoate-dependent enzymes, thereby converting the octanoylated domains into lipoylated derivatives. The chain is Lipoyl synthase from Porphyromonas gingivalis (strain ATCC 33277 / DSM 20709 / CIP 103683 / JCM 12257 / NCTC 11834 / 2561).